The primary structure comprises 30 residues: Ornithine carbamoyltransferase (30 aa).

Belongs to the aspartate/ornithine carbamoyltransferase superfamily. OTCase family.

Its subcellular location is the cytoplasm. The enzyme catalyses carbamoyl phosphate + L-ornithine = L-citrulline + phosphate + H(+). Its pathway is amino-acid biosynthesis; L-arginine biosynthesis; L-arginine from L-ornithine and carbamoyl phosphate: step 1/3. Its function is as follows. Has vitronectin and fibronectin-binding activity. In Staphylococcus epidermidis, this protein is Ornithine carbamoyltransferase (argF).